Consider the following 627-residue polypeptide: Mitochondrial Rho GTPase 1 (627 aa).

The Miro 1 domain occupies Met-1–His-169. Residues Met-1 to Arg-599 are Cytoplasmic-facing. GTP-binding positions include Gly-10 to Ser-17, Asp-58 to Arg-62, and Asn-114 to Asp-117. 2 EF-hand domains span residues Leu-185 to Lys-220 and Ala-305 to Leu-340. 9 residues coordinate Ca(2+): Asp-198, Asp-200, Asp-202, Tyr-204, Glu-209, Asp-318, Asp-320, Asp-322, and Glu-329. Residues Arg-420–Thr-584 enclose the Miro 2 domain. GTP contacts are provided by residues Gly-429–Ser-436, Glu-465–Gly-469, and Leu-534–Asp-537. The helical; Anchor for type IV membrane protein transmembrane segment at Thr-600 to Trp-620 threads the bilayer. The Mitochondrial intermembrane portion of the chain corresponds to Arg-621–Leu-627.

It belongs to the mitochondrial Rho GTPase family.

Its subcellular location is the mitochondrion outer membrane. Mitochondrial GTPase involved in mitochondrial trafficking. Probably involved in control of anterograde transport of mitochondria and their subcellular distribution. This chain is Mitochondrial Rho GTPase 1 (GEM1), found in Gibberella zeae (strain ATCC MYA-4620 / CBS 123657 / FGSC 9075 / NRRL 31084 / PH-1) (Wheat head blight fungus).